The sequence spans 84 residues: Beta-defensin 119 (84 aa).

An N-terminal signal peptide occupies residues 1–21 (MKLLYLFLAILLAIEEPVISG). Cystine bridges form between C28/C55, C35/C49, and C39/C56.

Belongs to the beta-defensin family.

It localises to the secreted. Functionally, has antibacterial activity. In Gorilla gorilla gorilla (Western lowland gorilla), this protein is Beta-defensin 119 (DEFB119).